The following is a 217-amino-acid chain: Large ribosomal subunit protein uL29m (217 aa).

Belongs to the universal ribosomal protein uL29 family. Component of the mitochondrial large ribosomal subunit. Mature mitochondrial ribosomes consist of a small (37S) and a large (54S) subunit. The 37S subunit contains at least 33 different proteins and 1 molecule of RNA (15S). The 54S subunit contains at least 45 different proteins and 1 molecule of RNA (21S).

Its subcellular location is the mitochondrion. This chain is Large ribosomal subunit protein uL29m (mrpl4), found in Aspergillus fumigatus (strain ATCC MYA-4609 / CBS 101355 / FGSC A1100 / Af293) (Neosartorya fumigata).